The chain runs to 244 residues: Carboxy-S-adenosyl-L-methionine synthase (244 aa).

S-adenosyl-L-methionine is bound by residues Tyr40, 65-67 (GCS), 90-91 (DN), 119-120 (DL), Asn134, and Arg201.

This sequence belongs to the class I-like SAM-binding methyltransferase superfamily. Cx-SAM synthase family. Homodimer.

The enzyme catalyses prephenate + S-adenosyl-L-methionine = carboxy-S-adenosyl-L-methionine + 3-phenylpyruvate + H2O. In terms of biological role, catalyzes the conversion of S-adenosyl-L-methionine (SAM) to carboxy-S-adenosyl-L-methionine (Cx-SAM). The chain is Carboxy-S-adenosyl-L-methionine synthase from Trichlorobacter lovleyi (strain ATCC BAA-1151 / DSM 17278 / SZ) (Geobacter lovleyi).